A 293-amino-acid chain; its full sequence is Extracellular metalloprotease PODANS_2_14170 (293 aa).

The first 18 residues, 1-18 (MRFSLALAAAGLAQTAFA), serve as a signal peptide directing secretion. Residue asparagine 60 is glycosylated (N-linked (GlcNAc...) asparagine). Histidine 206 contributes to the Zn(2+) binding site. The active site involves glutamate 207. Residue histidine 210 coordinates Zn(2+). Cysteine 242 and cysteine 269 are disulfide-bonded.

The protein belongs to the peptidase M43B family.

The protein localises to the secreted. Its function is as follows. Secreted metalloproteinase that allows assimilation of proteinaceous substrates. In Podospora anserina (strain S / ATCC MYA-4624 / DSM 980 / FGSC 10383) (Pleurage anserina), this protein is Extracellular metalloprotease PODANS_2_14170.